We begin with the raw amino-acid sequence, 303 residues long: tRNA dimethylallyltransferase (303 aa).

Gly-12–Thr-19 contacts ATP. Thr-14–Thr-19 provides a ligand contact to substrate. The interaction with substrate tRNA stretch occupies residues Asp-37–Gln-40.

It belongs to the IPP transferase family. In terms of assembly, monomer. It depends on Mg(2+) as a cofactor.

It carries out the reaction adenosine(37) in tRNA + dimethylallyl diphosphate = N(6)-dimethylallyladenosine(37) in tRNA + diphosphate. Its function is as follows. Catalyzes the transfer of a dimethylallyl group onto the adenine at position 37 in tRNAs that read codons beginning with uridine, leading to the formation of N6-(dimethylallyl)adenosine (i(6)A). The protein is tRNA dimethylallyltransferase of Fusobacterium nucleatum subsp. nucleatum (strain ATCC 25586 / DSM 15643 / BCRC 10681 / CIP 101130 / JCM 8532 / KCTC 2640 / LMG 13131 / VPI 4355).